The sequence spans 200 residues: Protein GrpE (200 aa).

A compositionally biased stretch (polar residues) spans 1–11; the sequence is MSNQTNKAQDN. The interval 1–25 is disordered; the sequence is MSNQTNKAQDNQVEEIVEGELLNEN.

Belongs to the GrpE family. As to quaternary structure, homodimer.

Its subcellular location is the cytoplasm. In terms of biological role, participates actively in the response to hyperosmotic and heat shock by preventing the aggregation of stress-denatured proteins, in association with DnaK and GrpE. It is the nucleotide exchange factor for DnaK and may function as a thermosensor. Unfolded proteins bind initially to DnaJ; upon interaction with the DnaJ-bound protein, DnaK hydrolyzes its bound ATP, resulting in the formation of a stable complex. GrpE releases ADP from DnaK; ATP binding to DnaK triggers the release of the substrate protein, thus completing the reaction cycle. Several rounds of ATP-dependent interactions between DnaJ, DnaK and GrpE are required for fully efficient folding. The polypeptide is Protein GrpE (Shewanella pealeana (strain ATCC 700345 / ANG-SQ1)).